Consider the following 94-residue polypeptide: Co-chaperonin GroES (94 aa).

This sequence belongs to the GroES chaperonin family. In terms of assembly, heptamer of 7 subunits arranged in a ring. Interacts with the chaperonin GroEL.

The protein resides in the cytoplasm. Together with the chaperonin GroEL, plays an essential role in assisting protein folding. The GroEL-GroES system forms a nano-cage that allows encapsulation of the non-native substrate proteins and provides a physical environment optimized to promote and accelerate protein folding. GroES binds to the apical surface of the GroEL ring, thereby capping the opening of the GroEL channel. The sequence is that of Co-chaperonin GroES from Ehrlichia canis (strain Jake).